A 113-amino-acid chain; its full sequence is Putative increased recombination centers protein 14 (113 aa).

The protein is Putative increased recombination centers protein 14 (IRC14) of Saccharomyces cerevisiae (strain ATCC 204508 / S288c) (Baker's yeast).